The primary structure comprises 38 residues: Cytochrome b6-f complex subunit 5 (38 aa).

Residues leucine 5–alanine 25 traverse the membrane as a helical segment.

It belongs to the PetG family. In terms of assembly, the 4 large subunits of the cytochrome b6-f complex are cytochrome b6, subunit IV (17 kDa polypeptide, PetD), cytochrome f and the Rieske protein, while the 4 small subunits are PetG, PetL, PetM and PetN. The complex functions as a dimer.

Its subcellular location is the cellular thylakoid membrane. Component of the cytochrome b6-f complex, which mediates electron transfer between photosystem II (PSII) and photosystem I (PSI), cyclic electron flow around PSI, and state transitions. PetG is required for either the stability or assembly of the cytochrome b6-f complex. The protein is Cytochrome b6-f complex subunit 5 of Synechocystis sp. (strain ATCC 27184 / PCC 6803 / Kazusa).